We begin with the raw amino-acid sequence, 444 residues long: Adenine permease AdeQ (444 aa).

Residues 1–29 are Cytoplasmic-facing; sequence MNNDNTDYVSNESGTLSRLFKLPQHGTTV. A helical membrane pass occupies residues 30–53; it reads RTELIAGMTTFLTMVYIVFVNPQI. The Periplasmic segment spans residues 54-63; that stretch reads LGAAQMDPKV. The helical transmembrane segment at 64-82 threads the bilayer; that stretch reads VFVTTCLIAGIGSIAMGIF. Topologically, residues 83–84 are cytoplasmic; that stretch reads AN. A discontinuously helical transmembrane segment spans residues 85-101; sequence LPVALAPAMGLNAFFAF. Residues 102–113 lie on the Periplasmic side of the membrane; sequence VVVGAMGISWQT. A helical transmembrane segment spans residues 114–133; that stretch reads GMGAIFWGAVGLFLLTLFRI. At 134-145 the chain is on the cytoplasmic side; the sequence is RYWMISNIPLSL. Residues 146 to 166 traverse the membrane as a helical segment; the sequence is RIGITSGIGLFIALMGLKNTG. At 167 to 182 the chain is on the periplasmic side; sequence VIVANKDTLVMIGDLS. A helical transmembrane segment spans residues 183-200; sequence SHGVLLGILGFFIITVLS. At 201–204 the chain is on the cytoplasmic side; that stretch reads SRHF. A helical transmembrane segment spans residues 205–223; sequence HAAVLVSIVVTSCCGLFFG. At 224-251 the chain is on the periplasmic side; the sequence is DVHFSGVYSIPPDISGVIGEVDLSGALT. The helical transmembrane segment at 252–280 threads the bilayer; that stretch reads LELAGIIFSFMLINLFDSSGTLIGVTDKA. The Cytoplasmic portion of the chain corresponds to 281 to 293; that stretch reads GLIDGNGKFPNMN. Residues 294 to 309 form a helical membrane-spanning segment; sequence KALYVDSVSSVAGAFI. The Periplasmic segment spans residues 310–311; that stretch reads GT. A discontinuously helical transmembrane segment spans residues 312–327; the sequence is SSVTAYIESTSGVAVG. Residues 328–331 lie on the Cytoplasmic side of the membrane; sequence GRTG. Residues 332–346 form a helical membrane-spanning segment; it reads LTAVVVGVMFLLVMF. At 347–357 the chain is on the periplasmic side; the sequence is FSPLVAIVPPY. Residues 358-377 traverse the membrane as a helical segment; sequence ATAGALIFVGVLMTSSLARV. The Cytoplasmic portion of the chain corresponds to 378–382; sequence NWDDF. Positions 383–418 form an intramembrane region, discontinuously helical; it reads TESVPAFITTVMMPFTFSITEGIALGFMSYCIMKVC. Topologically, residues 419-444 are cytoplasmic; that stretch reads TGRWRDLNLCVVVVAALFALKIILVD.

This sequence belongs to the nucleobase:cation symporter-2 (NCS2) (TC 2.A.40) family. Azg-like subfamily.

The protein localises to the cell inner membrane. In terms of biological role, high-affinity transporter for adenine. This chain is Adenine permease AdeQ (adeQ), found in Escherichia coli (strain K12).